Consider the following 138-residue polypeptide: Putative pre-16S rRNA nuclease (138 aa).

This sequence belongs to the YqgF nuclease family.

It is found in the cytoplasm. Could be a nuclease involved in processing of the 5'-end of pre-16S rRNA. In Haemophilus ducreyi (strain 35000HP / ATCC 700724), this protein is Putative pre-16S rRNA nuclease.